The sequence spans 597 residues: MRLSVFIIPLVESRQASGIINKQSTSLLIRFSLYLEASISTKSFFSKSQRISQTQSPICLSANYYQPDNLDMEATQKHMIQEGSSMFYHQPSSVKQMDLSVQTFDSYCTLESSSGTKSHPCLNNKNNSSSTTSFSSNESPISQANNNNLSRFNNHSPEENNNSPLSGSSATNTNETELSLMLKDLETAMMEPDVDNSYNNQGGFGQQHGVVSSAMYRSMEMISRGDLKGVLYECAKAVENYDLEMTDWLISQLQQMVSVSGEPVQRLGAYMLEGLVARLASSGSSIYKALRCKDPTGPELLTYMHILYEACPYFKFGYESANGAIAEAVKNESFVHIIDFQISQGGQWVSLIRALGARPGGPPNVRITGIDDPRSSFARQGGLELVGQRLGKLAEMCGVPFEFHGAALCCTEVEIEKLGVRNGEALAVNFPLVLHHMPDESVTVENHRDRLLRLVKHLSPNVVTLVEQEANTNTAPFLPRFVETMNHYLAVFESIDVKLARDHKERINVEQHCLAREVVNLIACEGVEREERHEPLGKWRSRFHMAGFKPYPLSSYVNATIKGLLESYSEKYTLEERDGALYLGWKNQPLITSCAWR.

The disordered stretch occupies residues Glu-111–Asn-172. Residues Asn-123 to Ser-169 show a composition bias toward low complexity. Residues Ser-218 to Arg-597 form the GRAS domain. Residues Gly-225–Ser-285 form a leucine repeat I (LRI) region. A VHIID region spans residues Met-304–Gly-369. The VHIID motif lies at Val-335–Asp-339. The leucine repeat II (LRII) stretch occupies residues Leu-385–Lys-417. Residues Leu-426–Asn-520 are PFYRE. The tract at residues Ala-523–Arg-597 is SAW.

This sequence belongs to the GRAS family. In terms of tissue distribution, expressed in seedlings, roots, shoots, leaves, flowers and siliques.

Its subcellular location is the nucleus. Its function is as follows. Probable transcription factor involved in plant development. The chain is Scarecrow-like protein 5 (SCL5) from Arabidopsis thaliana (Mouse-ear cress).